The chain runs to 86 residues: Toxin 3FTx-Dis4 (86 aa).

Residues M1–G19 form the signal peptide. 3 cysteine pairs are disulfide-bonded: C24–C45, C38–C63, and C79–C84.

This sequence belongs to the three-finger toxin family. Ancestral subfamily. In terms of tissue distribution, expressed by the venom gland.

The protein resides in the secreted. The polypeptide is Toxin 3FTx-Dis4 (Dispholidus typus (Boomslang)).